Consider the following 314-residue polypeptide: Malate dehydrogenase (314 aa).

9 to 15 (IGVGNVG) lines the NAD(+) pocket. The substrate site is built by Arg-84 and Arg-90. Residues Asn-97 and 120–122 (ISN) each bind NAD(+). Asn-122 and Arg-153 together coordinate substrate. His-177 acts as the Proton acceptor in catalysis.

Belongs to the LDH/MDH superfamily.

It carries out the reaction (S)-malate + NAD(+) = oxaloacetate + NADH + H(+). Its function is as follows. Catalyzes the reversible oxidation of malate to oxaloacetate. The polypeptide is Malate dehydrogenase (Aliarcobacter butzleri (strain RM4018) (Arcobacter butzleri)).